A 1213-amino-acid chain; its full sequence is uncharacterized protein (1213 aa).

The PH domain maps to 289–390; it reads ATKRQGWLLR…WGSVINNARE (102 aa). In terms of domain architecture, VASt spans 776–945; the sequence is LDDIVFDRVY…EVNFLEKATR (170 aa). Transmembrane regions (helical) follow at residues 996 to 1016 and 1025 to 1045; these read LFLQ…FHIF and FLVI…FCFG.

It localises to the cytoplasm. It is found in the nucleus membrane. Its subcellular location is the cytoskeleton. The protein localises to the microtubule organizing center. The protein resides in the spindle pole body. This is an uncharacterized protein from Schizosaccharomyces pombe (strain 972 / ATCC 24843) (Fission yeast).